We begin with the raw amino-acid sequence, 121 residues long: UPF0102 protein Mvan_2202 (121 aa).

The protein belongs to the UPF0102 family.

This chain is UPF0102 protein Mvan_2202, found in Mycolicibacterium vanbaalenii (strain DSM 7251 / JCM 13017 / BCRC 16820 / KCTC 9966 / NRRL B-24157 / PYR-1) (Mycobacterium vanbaalenii).